We begin with the raw amino-acid sequence, 287 residues long: Very long chain fatty acid elongase 4 (287 aa).

Transmembrane regions (helical) follow at residues 33-53 (ILVYCCVLYILLVFMVPEHIM), 64-84 (PFVFWNIGLCLFSFCGAYSCV), and 115-135 (FWVFYFILSKIPEMIDTVFLV). The short motif at 145–149 (HWYHH) is the HxxHH motif element. Residue His-148 is the Nucleophile of the active site. The next 4 membrane-spanning stretches (helical) occupy residues 150–170 (LTVAIFCWHAGHALIPSGLWF), 172–192 (TMNYCVHSIMYFYYFMCACGM), 199–219 (IAPFITMMQLLQMVAGTLIVL), and 241–261 (LGLVMYGSYFFLFAVLFGKLY).

This sequence belongs to the ELO family.

It localises to the membrane. The enzyme catalyses a very-long-chain acyl-CoA + malonyl-CoA + H(+) = a very-long-chain 3-oxoacyl-CoA + CO2 + CoA. Functionally, involved in the synthesis of fatty acids. Elongates C16:0 and C18:0 fatty acids to C26:0, with C24:0 being the main product. The chain is Very long chain fatty acid elongase 4 from Trypanosoma cruzi (strain CL Brener).